The primary structure comprises 254 residues: Type III pantothenate kinase (254 aa).

Residue 6–13 (DVGNTNIV) participates in ATP binding. Residues Phe100 and 107-110 (GADR) each bind substrate. Residue Asp109 is the Proton acceptor of the active site. Residue Asp129 coordinates K(+). Thr132 lines the ATP pocket. Thr184 is a substrate binding site.

This sequence belongs to the type III pantothenate kinase family. In terms of assembly, homodimer. The cofactor is NH4(+). K(+) is required as a cofactor.

Its subcellular location is the cytoplasm. The enzyme catalyses (R)-pantothenate + ATP = (R)-4'-phosphopantothenate + ADP + H(+). The protein operates within cofactor biosynthesis; coenzyme A biosynthesis; CoA from (R)-pantothenate: step 1/5. Functionally, catalyzes the phosphorylation of pantothenate (Pan), the first step in CoA biosynthesis. The protein is Type III pantothenate kinase of Moorella thermoacetica (strain ATCC 39073 / JCM 9320).